A 321-amino-acid chain; its full sequence is Degreening-related gene dee76 protein (321 aa).

This sequence belongs to the Mo25 family.

This is Degreening-related gene dee76 protein (DEE76) from Auxenochlorella protothecoides (Green microalga).